The following is a 442-amino-acid chain: Armadillo-like helical domain containing protein 1 (442 aa).

The chain is Armadillo-like helical domain containing protein 1 from Bos taurus (Bovine).